The primary structure comprises 460 residues: ATP synthase subunit beta (460 aa).

148 to 155 (GGAGVGKT) is a binding site for ATP.

The protein belongs to the ATPase alpha/beta chains family. F-type ATPases have 2 components, CF(1) - the catalytic core - and CF(0) - the membrane proton channel. CF(1) has five subunits: alpha(3), beta(3), gamma(1), delta(1), epsilon(1). CF(0) has three main subunits: a(1), b(2) and c(9-12). The alpha and beta chains form an alternating ring which encloses part of the gamma chain. CF(1) is attached to CF(0) by a central stalk formed by the gamma and epsilon chains, while a peripheral stalk is formed by the delta and b chains.

The protein localises to the cell inner membrane. The catalysed reaction is ATP + H2O + 4 H(+)(in) = ADP + phosphate + 5 H(+)(out). Functionally, produces ATP from ADP in the presence of a proton gradient across the membrane. The catalytic sites are hosted primarily by the beta subunits. The polypeptide is ATP synthase subunit beta (Alcanivorax borkumensis (strain ATCC 700651 / DSM 11573 / NCIMB 13689 / SK2)).